The sequence spans 253 residues: Transmembrane protein 69 (253 aa).

A run of 5 helical transmembrane segments spans residues 104–124 (ALYL…LMNV), 137–157 (VAYG…FAIP), 165–185 (DWMN…ALLF), 192–212 (AAVL…ALLP), and 223–243 (AILT…SSVY).

It localises to the membrane. The chain is Transmembrane protein 69 (tmem69) from Xenopus tropicalis (Western clawed frog).